Consider the following 647-residue polypeptide: MKKEEYLEKVALANLWMRAYYEKDEPLASDEEYDALIRELRAFEEQNKDEISKDSPTQKIAPTIQSEFKKIAHLKRMWSMEDVFDESEFRAWAKRAKCEKNFFIEPKFDGASLNLLYENGKLVSGATRGDGEVGEDITLNVFEIENIPKNIAYKERIEIRGEVVILKDDFEKINEKRALLNQSLFANPRNAASGSLRQLDTSITKERNLKFYPWGLGENTLNFTKHSEVMQFIRELGFLKDDFVRLCVNLDEVLKAYDELLALREKKPMMMDGMVVRIDDLALCEELGYTVKFPKFMAAFKFPALEKTTRLIGVNLQVGRSGVITPVAVLEPVNLDGVVVKSATLHNFDEIARLDVKINDFVSVIRSGDVIPKITKVFKERREGLEMEISRPKLCPTCQSELLDEGTLIKCQNIDCEDRLVNSIIHFVSKKCLNIDGLGENIVELLYKHKKITTLESIFHLKFNDFEGLEGFKEKKINNLLNAIEQARECELFRFITALGIEHIGEVAAKKLSLSFGKEWHKQSFEAYANLEGFGEQMALSLCEFTRVNRTRIDEFYKLLNLKIEKLEIKSDGVIFGKTFVITGTLSRSRDEFKALIEKLGGKVSGSVSKKTDYVLFGEEAGSKLIKAKELEIKCIDESAFNELVKE.

Residues 30 to 34 (DEEYD), 79 to 80 (SM), and Glu105 contribute to the NAD(+) site. Lys107 serves as the catalytic N6-AMP-lysine intermediate. Residues Arg128, Glu162, and Lys301 each coordinate NAD(+). Zn(2+) contacts are provided by Cys395, Cys398, Cys411, and Cys416. The 78-residue stretch at 570 to 647 (KSDGVIFGKT…ESAFNELVKE (78 aa)) folds into the BRCT domain.

The protein belongs to the NAD-dependent DNA ligase family. LigA subfamily. Mg(2+) is required as a cofactor. Mn(2+) serves as cofactor.

The catalysed reaction is NAD(+) + (deoxyribonucleotide)n-3'-hydroxyl + 5'-phospho-(deoxyribonucleotide)m = (deoxyribonucleotide)n+m + AMP + beta-nicotinamide D-nucleotide.. Its function is as follows. DNA ligase that catalyzes the formation of phosphodiester linkages between 5'-phosphoryl and 3'-hydroxyl groups in double-stranded DNA using NAD as a coenzyme and as the energy source for the reaction. It is essential for DNA replication and repair of damaged DNA. In Campylobacter jejuni subsp. jejuni serotype O:6 (strain 81116 / NCTC 11828), this protein is DNA ligase.